We begin with the raw amino-acid sequence, 314 residues long: Homoserine O-succinyltransferase (314 aa).

C142 functions as the Acyl-thioester intermediate in the catalytic mechanism. Positions 163 and 192 each coordinate substrate. The active-site Proton acceptor is H235. Residue E237 is part of the active site. R249 lines the substrate pocket.

This sequence belongs to the MetA family.

It localises to the cytoplasm. It carries out the reaction L-homoserine + succinyl-CoA = O-succinyl-L-homoserine + CoA. The protein operates within amino-acid biosynthesis; L-methionine biosynthesis via de novo pathway; O-succinyl-L-homoserine from L-homoserine: step 1/1. In terms of biological role, transfers a succinyl group from succinyl-CoA to L-homoserine, forming succinyl-L-homoserine. The chain is Homoserine O-succinyltransferase from Photobacterium profundum (strain SS9).